Here is a 275-residue protein sequence, read N- to C-terminus: Probable histone chaperone asf-1 (275 aa).

3 stretches are compositionally biased toward acidic residues: residues 157–166, 183–207, and 230–247; these read EDPVAEPVED, DGQE…EVDL, and KMED…DDEP. The disordered stretch occupies residues 157–275; it reads EDPVAEPVED…SDKTNNEMVQ (119 aa). Positions 265-275 are enriched in basic and acidic residues; that stretch reads LSDKTNNEMVQ.

The protein belongs to the ASF1 family. As to quaternary structure, interacts with histone H3 and histone H4.

The protein resides in the nucleus. Its function is as follows. Histone chaperone that facilitates histone deposition and histone exchange and removal during nucleosome assembly and disassembly. In Caenorhabditis elegans, this protein is Probable histone chaperone asf-1.